A 248-amino-acid chain; its full sequence is MLLCSLTLTLILLAVSGTKCDVKEFCAACSGVPGIPGSPGLPGRDGRDGVKGDPGPPGPIGPPGGMPGSPGHDGLIGPPGPPGERGDKGEPGERGPPGPPAYPDEELQTTLHDIRHQILQLMGALSLQGSMLAVGEKVFSTNGQVVDFDAIRESCARAGGRIAVPKSLEENAAIASLVTKHNTYAYLGLEEGPTAGDFYYLDGAPVNYTNWYPGEPRGRGKEKCVEMYTDGQWNDRSCLQYRLAICEF.

The N-terminal stretch at 1–20 is a signal peptide; the sequence is MLLCSLTLTLILLAVSGTKC. A Collagen-like domain is found at 31–100; that stretch reads GVPGIPGSPG…PGERGPPGPP (70 aa). The segment at 34–105 is disordered; it reads GIPGSPGLPG…PPGPPAYPDE (72 aa). Residues 54–65 are compositionally biased toward pro residues; that stretch reads PGPPGPIGPPGG. Basic and acidic residues predominate over residues 84–93; sequence ERGDKGEPGE. One can recognise a C-type lectin domain in the interval 134–247; sequence VGEKVFSTNG…CLQYRLAICE (114 aa). Intrachain disulfides connect Cys-155/Cys-246 and Cys-224/Cys-238. Residue Asn-207 is glycosylated (N-linked (GlcNAc...) asparagine). 4 residues coordinate Ca(2+): Glu-215, Arg-217, Asn-234, and Asp-235.

This sequence belongs to the SFTPA family. Oligomeric complex of 6 set of homotrimers.

It localises to the secreted. It is found in the extracellular space. Its subcellular location is the extracellular matrix. The protein localises to the surface film. In presence of calcium ions, it binds to surfactant phospholipids and contributes to lower the surface tension at the air-liquid interface in the alveoli of the mammalian lung and is essential for normal respiration. Enhances the expression of MYO18A/SP-R210 on alveolar macrophages. This chain is Pulmonary surfactant-associated protein A (SFTPA1), found in Equus caballus (Horse).